Consider the following 268-residue polypeptide: Interferon alpha/beta receptor 2 (268 aa).

The signal sequence occupies residues 1–16 (MGPWTLLLLHLPLVVS). At 17-223 (MLPAPTNVSI…TSPTAANTVP (207 aa)) the chain is on the extracellular side. Fibronectin type-III domains follow at residues 18–114 (LPAP…LTDT) and 115–217 (LLGP…TSPT). 2 disulfide bridges follow: cysteine 65–cysteine 74 and cysteine 191–cysteine 211. The chain crosses the membrane as a helical span at residues 224–244 (VVLSVLCAFSLLVVLLCGIVV). At 245 to 268 (YSGRLLCMHKPLPKTLSSVPLCGG) the chain is on the cytoplasmic side.

This sequence belongs to the type II cytokine receptor family. In terms of assembly, heterodimer with IFNAR1; forming the receptor for type I interferon.

The protein resides in the cell membrane. The protein localises to the cytoplasm. Functionally, together with IFNAR1, forms the heterodimeric receptor for type I interferons (including interferons alpha, beta, epsilon, omega and kappa). Type I interferon binding activates the JAK-STAT signaling cascade, resulting in transcriptional activation or repression of interferon-regulated genes that encode the effectors of the interferon response. Mechanistically, type I interferon-binding brings the IFNAR1 and IFNAR2 subunits into close proximity with one another, driving their associated Janus kinases (JAKs) (TYK2 bound to IFNAR1 and JAK1 bound to IFNAR2) to cross-phosphorylate one another. The activated kinases phosphorylate specific tyrosine residues on the intracellular domains of IFNAR1 and IFNAR2, forming docking sites for the STAT transcription factors (STAT1, STAT2 and STAT). STAT proteins are then phosphorylated by the JAKs, promoting their translocation into the nucleus to regulate expression of interferon-regulated genes. The protein is Interferon alpha/beta receptor 2 of Oncorhynchus mykiss (Rainbow trout).